The following is a 382-amino-acid chain: 4-hydroxy-3-methylbut-2-en-1-yl diphosphate synthase (flavodoxin) (382 aa).

The [4Fe-4S] cluster site is built by Cys273, Cys276, Cys308, and Glu315.

Belongs to the IspG family. [4Fe-4S] cluster is required as a cofactor.

The enzyme catalyses (2E)-4-hydroxy-3-methylbut-2-enyl diphosphate + oxidized [flavodoxin] + H2O + 2 H(+) = 2-C-methyl-D-erythritol 2,4-cyclic diphosphate + reduced [flavodoxin]. It participates in isoprenoid biosynthesis; isopentenyl diphosphate biosynthesis via DXP pathway; isopentenyl diphosphate from 1-deoxy-D-xylulose 5-phosphate: step 5/6. Its function is as follows. Converts 2C-methyl-D-erythritol 2,4-cyclodiphosphate (ME-2,4cPP) into 1-hydroxy-2-methyl-2-(E)-butenyl 4-diphosphate. The polypeptide is 4-hydroxy-3-methylbut-2-en-1-yl diphosphate synthase (flavodoxin) (Gluconacetobacter diazotrophicus (strain ATCC 49037 / DSM 5601 / CCUG 37298 / CIP 103539 / LMG 7603 / PAl5)).